We begin with the raw amino-acid sequence, 314 residues long: L-lactate dehydrogenase (314 aa).

Residues Val-17, Asp-38, Lys-43, Tyr-69, and 83-84 (GA) contribute to the NAD(+) site. Gln-86 and Arg-92 together coordinate substrate. NAD(+)-binding positions include Ser-105, 122–124 (ASN), and Ser-147. A substrate-binding site is contributed by 124-127 (NPVD). 152 to 155 (DSAR) contacts substrate. Beta-D-fructose 1,6-bisphosphate is bound by residues Arg-157 and His-172. Residue His-179 is the Proton acceptor of the active site. Tyr-223 is subject to Phosphotyrosine. Thr-232 lines the substrate pocket.

This sequence belongs to the LDH/MDH superfamily. LDH family. In terms of assembly, homotetramer.

The protein localises to the cytoplasm. The enzyme catalyses (S)-lactate + NAD(+) = pyruvate + NADH + H(+). It functions in the pathway fermentation; pyruvate fermentation to lactate; (S)-lactate from pyruvate: step 1/1. Its activity is regulated as follows. Allosterically activated by fructose 1,6-bisphosphate (FBP). Catalyzes the conversion of lactate to pyruvate. This chain is L-lactate dehydrogenase, found in Corynebacterium glutamicum (strain R).